The primary structure comprises 620 residues: Mitochondrial Rho GTPase 2 (620 aa).

Over 1-594 (MRRDVRILLL…ELHPTSFWLR (594 aa)) the chain is Cytoplasmic. The Miro 1 domain occupies 2–168 (RRDVRILLLG…FYYAQKAVLH (167 aa)). GTP-binding residues include Gly-16, Lys-17, Thr-18, and Ser-19. Residue Thr-18 coordinates Mg(2+). Asp-57 provides a ligand contact to Mg(2+). Residue Ser-59 coordinates GTP. A Glycyl lysine isopeptide (Lys-Gly) (interchain with G-Cter in ubiquitin) cross-link involves residue Lys-96. Positions 118, 119, 121, 149, and 150 each coordinate GTP. A Glycyl lysine isopeptide (Lys-Gly) (interchain with G-Cter in ubiquitin) cross-link involves residue Lys-119. Lys-164 participates in a covalent cross-link: Glycyl lysine isopeptide (Lys-Gly) (interchain with G-Cter in ubiquitin). EF-hand domains follow at residues 184–219 (ACAQ…CFGH) and 304–339 (RGYQ…FSGA). 8 residues coordinate Ca(2+): Asp-197, Asp-199, Asp-201, Glu-208, Asp-317, Asp-319, Asp-321, and Glu-328. The Miro 2 domain occupies 415–578 (RSVLMCKVLG…FTQLATMATF (164 aa)). The GTP site is built by Gly-427, Gly-429, Lys-430, Ser-431, and Ala-432. Ser-431 serves as a coordination point for Mg(2+). Glu-473 serves as a coordination point for Mg(2+). Residues Lys-527, Asp-529, and Cys-558 each coordinate GTP. Residues 595-617 (GVLVAVGTAVAAVLSFSLYRVLV) form a helical; Anchor for type IV membrane protein membrane-spanning segment. Residues 618–620 (KSR) are Mitochondrial intermembrane-facing.

The protein belongs to the mitochondrial Rho GTPase family. Homodimer. Interacts with the kinesin-binding proteins TRAK1/OIP106 and TRAK2/GRIF1, forming a link between mitochondria and the trafficking apparatus of the microtubules. Interacts with ARMCX3. Found in a complex with KIF5B, OGT, RHOT1 and TRAK1. Post-translationally, ubiquitinated by PRKN in a PINK1-dependent manner, leading to its degradation. Ubiquitously expressed.

The protein localises to the mitochondrion outer membrane. The catalysed reaction is GTP + H2O = GDP + phosphate + H(+). It catalyses the reaction ATP + H2O = ADP + phosphate + H(+). The enzyme catalyses UTP + H2O = UDP + phosphate + H(+). Its function is as follows. Atypical mitochondrial nucleoside-triphosphatase (NTPase) involved in mitochondrial trafficking. Probably involved in control of anterograde transport of mitochondria and their subcellular distribution. Can hydrolyze GTP, ATP and UTP. This is Mitochondrial Rho GTPase 2 (Rhot2) from Mus musculus (Mouse).